Consider the following 497-residue polypeptide: Probable cytosol aminopeptidase (497 aa).

Residues Lys263 and Asp268 each coordinate Mn(2+). Residue Lys275 is part of the active site. Asp286, Asp345, and Glu347 together coordinate Mn(2+). Residue Arg349 is part of the active site.

Belongs to the peptidase M17 family. The cofactor is Mn(2+).

It is found in the cytoplasm. The catalysed reaction is Release of an N-terminal amino acid, Xaa-|-Yaa-, in which Xaa is preferably Leu, but may be other amino acids including Pro although not Arg or Lys, and Yaa may be Pro. Amino acid amides and methyl esters are also readily hydrolyzed, but rates on arylamides are exceedingly low.. The enzyme catalyses Release of an N-terminal amino acid, preferentially leucine, but not glutamic or aspartic acids.. In terms of biological role, presumably involved in the processing and regular turnover of intracellular proteins. Catalyzes the removal of unsubstituted N-terminal amino acids from various peptides. This Methylorubrum extorquens (strain CM4 / NCIMB 13688) (Methylobacterium extorquens) protein is Probable cytosol aminopeptidase.